The chain runs to 387 residues: Putative acid--amine ligase YjfC (387 aa).

An ATP-binding site is contributed by 101-103; the sequence is RMD. Positions 103, 116, and 118 each coordinate Mg(2+). Residues Lys265, Lys302, Gly309, Gln337, and 372–374 contribute to the ATP site; that span reads LIT.

The protein belongs to the glutathionylspermidine synthase preATP-grasp family.

In terms of biological role, may be a ligase forming an amide bond. Shows ATPase activity. Despite its similarity to the C-terminal synthetase domain of Gss, is not a glutathionylspermidine (Gsp) synthetase. Cannot synthesize Gsp, glutathione (GSH), or GSH intermediates, from GSH and spermidine, cysteine and glutamate, gamma-glutamylcysteine and spermidine, and gamma-glutamylcysteine and glycine. Does not bind to Gsp. The chain is Putative acid--amine ligase YjfC (yjfC) from Escherichia coli (strain K12).